The primary structure comprises 127 residues: Succinate dehydrogenase cytochrome b560 subunit (127 aa).

Helical transmembrane passes span 36–53 (VGLA…RIIL) and 60–83 (NLLT…FILL). Position 88 (H88) interacts with heme. The chain crosses the membrane as a helical span at residues 109 to 126 (LSKFSLFLLVSLSLILIF).

The protein belongs to the cytochrome b560 family. Forms part of complex II containing four subunits: a 70 kDa flavoprotein (FP), a 27 kDa iron-sulfur protein (IP), a cytochrome B and a membrane-anchoring protein. It depends on heme as a cofactor.

The protein resides in the mitochondrion inner membrane. The protein operates within carbohydrate metabolism; tricarboxylic acid cycle. In terms of biological role, membrane-anchoring subunit of succinate dehydrogenase (SDH) that is involved in complex II of the mitochondrial electron transport chain and is responsible for transferring electrons from succinate to ubiquinone (coenzyme Q). The chain is Succinate dehydrogenase cytochrome b560 subunit (SDH3) from Chondrus crispus (Carrageen Irish moss).